The primary structure comprises 132 residues: Fumarate reductase subunit C (132 aa).

The next 3 membrane-spanning stretches (helical) occupy residues 30-50 (ATSV…LCFA), 70-90 (IVVF…VTYF), and 110-130 (VVRN…LVLV).

Belongs to the FrdC family. In terms of assembly, part of an enzyme complex containing four subunits: a flavoprotein (FrdA), an iron-sulfur protein (FrdB), and two hydrophobic anchor proteins (FrdC and FrdD).

The protein localises to the cell inner membrane. Anchors the catalytic components of the fumarate reductase complex to the cell membrane, binds quinones. This chain is Fumarate reductase subunit C, found in Haemophilus influenzae (strain ATCC 51907 / DSM 11121 / KW20 / Rd).